We begin with the raw amino-acid sequence, 258 residues long: Lyso-ornithine lipid O-acyltransferase (258 aa).

The chain crosses the membrane as a helical span at residues 7-29 (LLRSARLLGLVALGLGLAAWVSL).

It belongs to the 1-acyl-sn-glycerol-3-phosphate acyltransferase family. OlsA subfamily.

The protein localises to the membrane. The enzyme catalyses a lyso-ornithine lipid + a fatty acyl-[ACP] = an N(2)-[(3R)-3-(acyloxy)acyl]-L-ornithine lipid + holo-[ACP]. The protein operates within lipid metabolism. Catalyzes the second step in the formation of ornithine lipids, which are phosphorus-free membrane lipids. Uses acyl-acyl carrier protein (acyl-AcpP) as an acyl donor and converts lyso-ornithine lipid (LOL) into ornithine lipid (OL). In Pseudomonas aeruginosa (strain ATCC 15692 / DSM 22644 / CIP 104116 / JCM 14847 / LMG 12228 / 1C / PRS 101 / PAO1), this protein is Lyso-ornithine lipid O-acyltransferase.